The sequence spans 178 residues: Inorganic pyrophosphatase (178 aa).

Substrate-binding residues include K30, R44, and Y56. Residues D66, D71, and D103 each coordinate Mg(2+). Y140 is a binding site for substrate.

Belongs to the PPase family. In terms of assembly, homohexamer. It depends on Mg(2+) as a cofactor.

The protein localises to the cytoplasm. It catalyses the reaction diphosphate + H2O = 2 phosphate + H(+). Catalyzes the hydrolysis of inorganic pyrophosphate (PPi) forming two phosphate ions. This Thermococcus kodakarensis (strain ATCC BAA-918 / JCM 12380 / KOD1) (Pyrococcus kodakaraensis (strain KOD1)) protein is Inorganic pyrophosphatase.